The chain runs to 683 residues: Glucosylceramidase (683 aa).

Residue Glu-254 is the Proton donor of the active site. The active-site Nucleophile is the Glu-483.

The protein belongs to the glycosyl hydrolase 5 (cellulase A) family.

The protein resides in the membrane. It catalyses the reaction a beta-D-glucosyl-(1&lt;-&gt;1')-N-acylsphing-4-enine + H2O = an N-acylsphing-4-enine + D-glucose. With respect to regulation, inhibited by metal cations Co(2+), Cu(2+), Ni(2+), Pb(2+) and Zn(2+). Not inhibited by metal chelator ethylenediaminetetraacetic acid (EDTA). Specifically hydrolyzes the glucosidic linkage in glucosylceramide. May prevent accumulation of aberrent glucosylceramide containing immature ceramide. This Rhizopus delemar (strain RA 99-880 / ATCC MYA-4621 / FGSC 9543 / NRRL 43880) (Mucormycosis agent) protein is Glucosylceramidase.